A 1482-amino-acid polypeptide reads, in one-letter code: Chromosome partition protein MukB (1482 aa).

34-41 (GGNGAGKS) contributes to the ATP binding site. Coiled-coil stretches lie at residues 326–472 (LEAD…QTAH), 507–602 (NQRH…RRAP), 780–805 (RAAR…ATLS), 832–1110 (DDPE…REQV), and 1209–1265 (VEAI…LQSV). Positions 666-783 (PGGSEDPRLN…SLPLFGRAAR (118 aa)) are flexible hinge.

The protein belongs to the SMC family. MukB subfamily. In terms of assembly, homodimerization via its hinge domain. Binds to DNA via its C-terminal region. Interacts, and probably forms a ternary complex, with MukE and MukF via its C-terminal region. The complex formation is stimulated by calcium or magnesium. Interacts with tubulin-related protein FtsZ.

It is found in the cytoplasm. Its subcellular location is the nucleoid. Plays a central role in chromosome condensation, segregation and cell cycle progression. Functions as a homodimer, which is essential for chromosome partition. Involved in negative DNA supercoiling in vivo, and by this means organize and compact chromosomes. May achieve or facilitate chromosome segregation by condensation DNA from both sides of a centrally located replisome during cell division. This chain is Chromosome partition protein MukB, found in Klebsiella pneumoniae subsp. pneumoniae (strain ATCC 700721 / MGH 78578).